We begin with the raw amino-acid sequence, 367 residues long: Putative methylthioribose-1-phosphate isomerase (367 aa).

Substrate-binding positions include 65-67 (RGA), Arg106, and Gln218. The active-site Proton donor is Asp259. Position 269-270 (269-270 (NK)) interacts with substrate.

The protein belongs to the eIF-2B alpha/beta/delta subunits family. MtnA subfamily.

It catalyses the reaction 5-(methylsulfanyl)-alpha-D-ribose 1-phosphate = 5-(methylsulfanyl)-D-ribulose 1-phosphate. Functionally, catalyzes the interconversion of methylthioribose-1-phosphate (MTR-1-P) into methylthioribulose-1-phosphate (MTRu-1-P). This is Putative methylthioribose-1-phosphate isomerase from Sulfolobus acidocaldarius (strain ATCC 33909 / DSM 639 / JCM 8929 / NBRC 15157 / NCIMB 11770).